The sequence spans 361 residues: Serine/threonine-protein kinase SRK2B (361 aa).

The 257-residue stretch at 4–260 (YELVKDIGAG…IGDIKKHPWF (257 aa)) folds into the Protein kinase domain. ATP is bound by residues 10–18 (IGAGNFGVA) and K33. D123 acts as the Proton acceptor in catalysis. S154 is modified (phosphoserine). The disordered stretch occupies residues 311–361 (AFGWGGGEDAEGKEEDAEEEVEEVEEEEDEEDEYDKTVKQVHASMGEVRVS). A compositionally biased stretch (acidic residues) spans 318-344 (EDAEGKEEDAEEEVEEVEEEEDEEDEY).

The protein belongs to the protein kinase superfamily. Ser/Thr protein kinase family. In terms of tissue distribution, expressed in seedlings.

It catalyses the reaction L-seryl-[protein] + ATP = O-phospho-L-seryl-[protein] + ADP + H(+). The catalysed reaction is L-threonyl-[protein] + ATP = O-phospho-L-threonyl-[protein] + ADP + H(+). This chain is Serine/threonine-protein kinase SRK2B (SRK2B), found in Arabidopsis thaliana (Mouse-ear cress).